A 316-amino-acid polypeptide reads, in one-letter code: 4-diphosphocytidyl-2-C-methyl-D-erythritol kinase (316 aa).

Lysine 23 is an active-site residue. 108-118 serves as a coordination point for ATP; it reads PVAGGMAGGSA. Aspartate 150 is an active-site residue.

The protein belongs to the GHMP kinase family. IspE subfamily.

The enzyme catalyses 4-CDP-2-C-methyl-D-erythritol + ATP = 4-CDP-2-C-methyl-D-erythritol 2-phosphate + ADP + H(+). Its pathway is isoprenoid biosynthesis; isopentenyl diphosphate biosynthesis via DXP pathway; isopentenyl diphosphate from 1-deoxy-D-xylulose 5-phosphate: step 3/6. Functionally, catalyzes the phosphorylation of the position 2 hydroxy group of 4-diphosphocytidyl-2C-methyl-D-erythritol. The protein is 4-diphosphocytidyl-2-C-methyl-D-erythritol kinase of Mycolicibacterium paratuberculosis (strain ATCC BAA-968 / K-10) (Mycobacterium paratuberculosis).